We begin with the raw amino-acid sequence, 245 residues long: ATP synthase subunit a, chloroplastic (245 aa).

A run of 5 helical transmembrane segments spans residues 34–54 (TLMTSWFVISLIMIIAFLSNL), 93–113 (VPFLGAVFLFIFVSNWGGALL), 132–152 (INTTVALALLTSFSYFYAGIS), 197–217 (LVIAVLVSLVPLFVPVPLMLL), and 218–238 (GLFTSAIQALVFSTLAGAYIG).

Belongs to the ATPase A chain family. As to quaternary structure, F-type ATPases have 2 components, CF(1) - the catalytic core - and CF(0) - the membrane proton channel. CF(1) has five subunits: alpha(3), beta(3), gamma(1), delta(1), epsilon(1). CF(0) has four main subunits: a, b, b' and c.

The protein resides in the plastid. It is found in the chloroplast thylakoid membrane. Key component of the proton channel; it plays a direct role in the translocation of protons across the membrane. The chain is ATP synthase subunit a, chloroplastic from Bigelowiella natans (Pedinomonas minutissima).